We begin with the raw amino-acid sequence, 268 residues long: Nickel import ATP-binding protein NikE (268 aa).

An ABC transporter domain is found at 4–252 (LNVCGLSHHY…SSDAGRVLQN (249 aa)). Residue 45-52 (GRSGCGKS) coordinates ATP.

The protein belongs to the ABC transporter superfamily. Nickel importer (TC 3.A.1.5.3) family. In terms of assembly, the complex is composed of two ATP-binding proteins (NikD and NikE), two transmembrane proteins (NikB and NikC) and a solute-binding protein (NikA).

It localises to the cell inner membrane. It carries out the reaction Ni(2+)(out) + ATP + H2O = Ni(2+)(in) + ADP + phosphate + H(+). Its function is as follows. Part of the ABC transporter complex NikABCDE involved in nickel import. Responsible for energy coupling to the transport system. The chain is Nickel import ATP-binding protein NikE from Shigella flexneri.